The primary structure comprises 462 residues: A-type ATP synthase subunit B (462 aa).

It belongs to the ATPase alpha/beta chains family. Has multiple subunits with at least A(3), B(3), C, D, E, F, H, I and proteolipid K(x).

Its subcellular location is the cell membrane. In terms of biological role, component of the A-type ATP synthase that produces ATP from ADP in the presence of a proton gradient across the membrane. The B chain is a regulatory subunit. The chain is A-type ATP synthase subunit B from Methanococcus maripaludis (strain C7 / ATCC BAA-1331).